A 488-amino-acid polypeptide reads, in one-letter code: NADH-ubiquinone oxidoreductase chain 2 (488 aa).

Transmembrane regions (helical) follow at residues 4-24 (LFLA…LLIH), 45-65 (WLGL…APLL), 84-104 (FCQI…FDFF), 111-131 (AFEF…MISA), 134-154 (LIAM…LAAS), 168-188 (YLIL…MIYG), 215-235 (IFMG…AVPF), 252-272 (AFLS…VFIY), 282-302 (IFFF…MAQT), 308-328 (LAYS…CGTI), 334-354 (LLIG…IVLA), 375-395 (ILAI…PLAG), 400-420 (FYLF…VGVV), and 456-476 (LLLA…SPLF).

This sequence belongs to the complex I subunit 2 family.

It is found in the mitochondrion inner membrane. It carries out the reaction a ubiquinone + NADH + 5 H(+)(in) = a ubiquinol + NAD(+) + 4 H(+)(out). Core subunit of the mitochondrial membrane respiratory chain NADH dehydrogenase (Complex I) that is believed to belong to the minimal assembly required for catalysis. Complex I functions in the transfer of electrons from NADH to the respiratory chain. The immediate electron acceptor for the enzyme is believed to be ubiquinone. This chain is NADH-ubiquinone oxidoreductase chain 2 (ND2), found in Oenothera berteroana (Bertero's evening primrose).